A 137-amino-acid polypeptide reads, in one-letter code: ATP synthase epsilon chain (137 aa).

It belongs to the ATPase epsilon chain family. In terms of assembly, F-type ATPases have 2 components, CF(1) - the catalytic core - and CF(0) - the membrane proton channel. CF(1) has five subunits: alpha(3), beta(3), gamma(1), delta(1), epsilon(1). CF(0) has three main subunits: a, b and c.

It localises to the cell membrane. Its function is as follows. Produces ATP from ADP in the presence of a proton gradient across the membrane. This chain is ATP synthase epsilon chain, found in Desulforudis audaxviator (strain MP104C).